We begin with the raw amino-acid sequence, 156 residues long: Small ribosomal subunit protein uS7 (156 aa).

It belongs to the universal ribosomal protein uS7 family. In terms of assembly, part of the 30S ribosomal subunit. Contacts proteins S9 and S11.

One of the primary rRNA binding proteins, it binds directly to 16S rRNA where it nucleates assembly of the head domain of the 30S subunit. Is located at the subunit interface close to the decoding center, probably blocks exit of the E-site tRNA. This is Small ribosomal subunit protein uS7 from Proteus mirabilis (strain HI4320).